We begin with the raw amino-acid sequence, 618 residues long: 1-deoxy-D-xylulose-5-phosphate synthase (618 aa).

Thiamine diphosphate-binding positions include histidine 76 and 117 to 119; that span reads GHS. Residue aspartate 148 coordinates Mg(2+). Thiamine diphosphate-binding positions include 149-150, asparagine 177, tyrosine 284, and glutamate 366; that span reads GA. Asparagine 177 contacts Mg(2+).

Belongs to the transketolase family. DXPS subfamily. As to quaternary structure, homodimer. Mg(2+) serves as cofactor. Thiamine diphosphate is required as a cofactor.

It carries out the reaction D-glyceraldehyde 3-phosphate + pyruvate + H(+) = 1-deoxy-D-xylulose 5-phosphate + CO2. Its pathway is metabolic intermediate biosynthesis; 1-deoxy-D-xylulose 5-phosphate biosynthesis; 1-deoxy-D-xylulose 5-phosphate from D-glyceraldehyde 3-phosphate and pyruvate: step 1/1. In terms of biological role, catalyzes the acyloin condensation reaction between C atoms 2 and 3 of pyruvate and glyceraldehyde 3-phosphate to yield 1-deoxy-D-xylulose-5-phosphate (DXP). The chain is 1-deoxy-D-xylulose-5-phosphate synthase from Dechloromonas aromatica (strain RCB).